The sequence spans 393 residues: Asparagine--oxo-acid transaminase (393 aa).

L-asparagine contacts are provided by Gly39, Trp126, and Asn176. At Lys239 the chain carries N6-(pyridoxal phosphate)lysine. L-asparagine is bound at residue Arg370.

The protein belongs to the class-I pyridoxal-phosphate-dependent aminotransferase family. The cofactor is pyridoxal 5'-phosphate.

The enzyme catalyses a 2-oxocarboxylate + L-asparagine = 2-oxosuccinamate + an L-alpha-amino acid. The catalysed reaction is L-asparagine + 2-oxoglutarate = 2-oxosuccinamate + L-glutamate. Catalyzes the transamination reaction between L-asparagine and 2-oxoglutarate to produce L-glutamate and 2-oxosuccinamate. Is not active with pyruvate as amine acceptor. May also use other amino acids as substrates. The sequence is that of Asparagine--oxo-acid transaminase from Streptococcus mutans serotype c (strain ATCC 700610 / UA159).